The chain runs to 305 residues: Elongation factor Ts (305 aa).

The interval 79–82 (TDFV) is involved in Mg(2+) ion dislocation from EF-Tu.

This sequence belongs to the EF-Ts family.

The protein localises to the cytoplasm. In terms of biological role, associates with the EF-Tu.GDP complex and induces the exchange of GDP to GTP. It remains bound to the aminoacyl-tRNA.EF-Tu.GTP complex up to the GTP hydrolysis stage on the ribosome. The polypeptide is Elongation factor Ts (Brucella anthropi (strain ATCC 49188 / DSM 6882 / CCUG 24695 / JCM 21032 / LMG 3331 / NBRC 15819 / NCTC 12168 / Alc 37) (Ochrobactrum anthropi)).